The primary structure comprises 507 residues: DNA nucleotidylexotransferase (507 aa).

The Nuclear localization signal signature appears at 11–17 (PLRKKAK). A BRCT domain is found at 27-124 (QHNVKFKEIV…RPVEIQNRHL (98 aa)). Residues 254–258 (VGLKT) are involved in DNA binding. A 2'-deoxyribonucleoside 5'-triphosphate contacts are provided by residues 329 to 334 (GFRRGK) and 338 to 341 (HDVD). D339, D341, and D431 together coordinate Mg(2+). 446–447 (GW) provides a ligand contact to a 2'-deoxyribonucleoside 5'-triphosphate.

This sequence belongs to the DNA polymerase type-X family. Requires Mg(2+) as cofactor. In terms of tissue distribution, found in the thymus and not in the spleen, kidney, intestine, or liver.

It localises to the nucleus. The enzyme catalyses DNA(n) + a 2'-deoxyribonucleoside 5'-triphosphate = DNA(n+1) + diphosphate. Functionally, template-independent DNA polymerase which catalyzes the random addition of deoxynucleoside 5'-triphosphate to the 3'-end of a DNA initiator. One of the in vivo functions of this enzyme is the addition of nucleotides at the junction (N region) of rearranged Ig heavy chain and T-cell receptor gene segments during the maturation of B- and T-cells. The polypeptide is DNA nucleotidylexotransferase (dntt) (Xenopus laevis (African clawed frog)).